We begin with the raw amino-acid sequence, 331 residues long: Phosphate acyltransferase (331 aa).

Belongs to the PlsX family. As to quaternary structure, homodimer. Probably interacts with PlsY.

The protein resides in the cytoplasm. It carries out the reaction a fatty acyl-[ACP] + phosphate = an acyl phosphate + holo-[ACP]. It functions in the pathway lipid metabolism; phospholipid metabolism. Functionally, catalyzes the reversible formation of acyl-phosphate (acyl-PO(4)) from acyl-[acyl-carrier-protein] (acyl-ACP). This enzyme utilizes acyl-ACP as fatty acyl donor, but not acyl-CoA. The protein is Phosphate acyltransferase of Clostridium acetobutylicum (strain ATCC 824 / DSM 792 / JCM 1419 / IAM 19013 / LMG 5710 / NBRC 13948 / NRRL B-527 / VKM B-1787 / 2291 / W).